We begin with the raw amino-acid sequence, 118 residues long: UPF0102 protein Francci3_3586 (118 aa).

The protein belongs to the UPF0102 family.

This chain is UPF0102 protein Francci3_3586, found in Frankia casuarinae (strain DSM 45818 / CECT 9043 / HFP020203 / CcI3).